Reading from the N-terminus, the 505-residue chain is RNA-splicing ligase RtcB homolog (505 aa).

Positions 119, 122, 227, and 259 each coordinate Mn(2+). Position 226-230 (226-230) interacts with GMP; sequence NHYAE. Ser300 is subject to Phosphoserine. Mn(2+) is bound at residue His353. GMP is bound by residues 353 to 354, 402 to 405, Ser409, and 428 to 431; these read HN, GGTM, and HGAG. The GMP-histidine intermediate role is filled by His428. Lys496 participates in a covalent cross-link: Glycyl lysine isopeptide (Lys-Gly) (interchain with G-Cter in SUMO2). Lys504 contributes to the GMP binding site.

It belongs to the RtcB family. Catalytic component of the tRNA-splicing ligase complex. Mn(2+) is required as a cofactor.

The protein localises to the nucleus. It is found in the cytoplasm. The enzyme catalyses a 3'-end 3'-phospho-ribonucleotide-RNA + a 5'-end dephospho-ribonucleoside-RNA + GTP = a ribonucleotidyl-ribonucleotide-RNA + GMP + diphosphate. It carries out the reaction a 3'-end 2',3'-cyclophospho-ribonucleotide-RNA + a 5'-end dephospho-ribonucleoside-RNA + GTP + H2O = a ribonucleotidyl-ribonucleotide-RNA + GMP + diphosphate + H(+). Functionally, catalytic subunit of the tRNA-splicing ligase complex that acts by directly joining spliced tRNA halves to mature-sized tRNAs by incorporating the precursor-derived splice junction phosphate into the mature tRNA as a canonical 3',5'-phosphodiester. May act as an RNA ligase with broad substrate specificity, and may function toward other RNAs. In Sus scrofa (Pig), this protein is RNA-splicing ligase RtcB homolog.